Consider the following 386-residue polypeptide: ATP phosphoribosyltransferase regulatory subunit (386 aa).

The protein belongs to the class-II aminoacyl-tRNA synthetase family. HisZ subfamily. As to quaternary structure, heteromultimer composed of HisG and HisZ subunits.

The protein localises to the cytoplasm. It participates in amino-acid biosynthesis; L-histidine biosynthesis; L-histidine from 5-phospho-alpha-D-ribose 1-diphosphate: step 1/9. In terms of biological role, required for the first step of histidine biosynthesis. May allow the feedback regulation of ATP phosphoribosyltransferase activity by histidine. The polypeptide is ATP phosphoribosyltransferase regulatory subunit (Variovorax paradoxus (strain S110)).